The sequence spans 303 residues: Dihydroorotate dehydrogenase B (NAD(+)), catalytic subunit (303 aa).

Residues K46, 70 to 74 (NAIGL), and N124 contribute to the substrate site. 46-47 (KS) provides a ligand contact to FMN. An FMN-binding site is contributed by N124. C127 acts as the Nucleophile in catalysis. Positions 163 and 189 each coordinate FMN. Substrate is bound at residue 190–191 (NS). FMN is bound by residues G216, 242 to 243 (GG), and 264 to 265 (GT).

The protein belongs to the dihydroorotate dehydrogenase family. Type 1 subfamily. Heterotetramer of 2 PyrK and 2 PyrD type B subunits. FMN is required as a cofactor.

Its subcellular location is the cytoplasm. The enzyme catalyses (S)-dihydroorotate + NAD(+) = orotate + NADH + H(+). The protein operates within pyrimidine metabolism; UMP biosynthesis via de novo pathway; orotate from (S)-dihydroorotate (NAD(+) route): step 1/1. Functionally, catalyzes the conversion of dihydroorotate to orotate with NAD(+) as electron acceptor. The polypeptide is Dihydroorotate dehydrogenase B (NAD(+)), catalytic subunit (pyrD) (Methanothermobacter thermautotrophicus (strain ATCC 29096 / DSM 1053 / JCM 10044 / NBRC 100330 / Delta H) (Methanobacterium thermoautotrophicum)).